The primary structure comprises 645 residues: 1,4-alpha-glucan branching enzyme GlgB (645 aa).

The active-site Nucleophile is the aspartate 309. Glutamate 352 acts as the Proton donor in catalysis. The interval 619–645 (VKTRKGSKKQDGSKTKVRSNVTSRGKR) is disordered. The segment covering 636 to 645 (RSNVTSRGKR) has biased composition (polar residues).

Belongs to the glycosyl hydrolase 13 family. GlgB subfamily. In terms of assembly, monomer.

The enzyme catalyses Transfers a segment of a (1-&gt;4)-alpha-D-glucan chain to a primary hydroxy group in a similar glucan chain.. It functions in the pathway glycan biosynthesis; glycogen biosynthesis. Its function is as follows. Catalyzes the formation of the alpha-1,6-glucosidic linkages in glycogen by scission of a 1,4-alpha-linked oligosaccharide from growing alpha-1,4-glucan chains and the subsequent attachment of the oligosaccharide to the alpha-1,6 position. The protein is 1,4-alpha-glucan branching enzyme GlgB of Bacillus cereus (strain B4264).